The sequence spans 593 residues: Mitosis inducer protein kinase cdr1 (593 aa).

One can recognise a Protein kinase domain in the interval 12-258 (WRLGKTLGTG…IPEVFSHPFL (247 aa)). Residues 18-26 (LGTGSTSCV) and Lys41 contribute to the ATP site. Asp128 (proton acceptor) is an active-site residue. A Phosphoserine modification is found at Ser550.

This sequence belongs to the protein kinase superfamily. CAMK Ser/Thr protein kinase family. NIM1 subfamily. Interacts with msp1.

It carries out the reaction L-seryl-[protein] + ATP = O-phospho-L-seryl-[protein] + ADP + H(+). The catalysed reaction is L-threonyl-[protein] + ATP = O-phospho-L-threonyl-[protein] + ADP + H(+). Functionally, this protein, a dose-dependent mitotic inducer, appears to function as a negative regulator of mitosis inhibitor wee1 by phosphorylating and inactivating it. The chain is Mitosis inducer protein kinase cdr1 (cdr1) from Schizosaccharomyces pombe (strain 972 / ATCC 24843) (Fission yeast).